A 554-amino-acid chain; its full sequence is Glucose-6-phosphate isomerase (554 aa).

The active-site Proton donor is the Glu-359. Active-site residues include His-390 and Lys-518.

This sequence belongs to the GPI family.

It is found in the cytoplasm. It carries out the reaction alpha-D-glucose 6-phosphate = beta-D-fructose 6-phosphate. It participates in carbohydrate biosynthesis; gluconeogenesis. It functions in the pathway carbohydrate degradation; glycolysis; D-glyceraldehyde 3-phosphate and glycerone phosphate from D-glucose: step 2/4. Catalyzes the reversible isomerization of glucose-6-phosphate to fructose-6-phosphate. This is Glucose-6-phosphate isomerase from Pseudomonas putida (strain W619).